The chain runs to 371 residues: Neuropeptide S receptor (371 aa).

At 1-52 (MPANFTEGSFDSNGTGQMLDSSPVACTETVTFTEVVEGKEWGSFYYSFKTEQ) the chain is on the extracellular side. Residues Asn4 and Asn13 are each glycosylated (N-linked (GlcNAc...) asparagine). The helical transmembrane segment at 53–73 (LITLWVLFVFTIVGNSVVLFS) threads the bilayer. Residues 74–82 (TWRRKRKSR) are Cytoplasmic-facing. The helical transmembrane segment at 83–103 (MTFFVTQLAITDSFTGLVNIL) threads the bilayer. Residues 104 to 123 (TDIIWRFTGDFMAPDLVCRV) are Extracellular-facing. A disulfide bridge links Cys121 with Cys197. The chain crosses the membrane as a helical span at residues 124-144 (VRYLQVVLLYASTYVLVSLSI). Residues 145-164 (DRYHAIVYPMKFLQGEKQAK) are Cytoplasmic-facing. Residues 165 to 185 (VLIVIAWSLSFLFSIPTLIIF) form a helical membrane-spanning segment. Over 186–212 (GKRTLSNGEVQCWALWPDDSYWTPYMT) the chain is Extracellular. Residues 213 to 233 (IVAFLVYFIPLTIISVMYGIV) form a helical membrane-spanning segment. Topologically, residues 234–275 (IRTIWIKSKTYETVISNCSDGKLCSSYNRGLISKAKIKAIKY) are cytoplasmic. A helical membrane pass occupies residues 276 to 296 (SIVIILAFICCWSPYFLFDIL). The Extracellular segment spans residues 297-312 (DNFNLLPDTQERFYAS). The chain crosses the membrane as a helical span at residues 313–333 (VIIQNLPALNSAINPLIYCVF). The Cytoplasmic portion of the chain corresponds to 334 to 371 (SSSISFPCGERRSQDSIMTFRERTERHEMQILSKPEFI).

The protein belongs to the G-protein coupled receptor 1 family. Vasopressin/oxytocin receptor subfamily.

The protein localises to the cell membrane. In terms of biological role, G-protein coupled receptor for neuropeptide S (NPS). Promotes mobilization of intracellular Ca(2+) stores. Inhibits cell growth in response to NPS binding. Involved in pathogenesis of asthma and other IgE-mediated diseases. The sequence is that of Neuropeptide S receptor (NPSR1) from Macaca mulatta (Rhesus macaque).